Consider the following 512-residue polypeptide: 2,3-bisphosphoglycerate-independent phosphoglycerate mutase (512 aa).

Mn(2+) contacts are provided by Asp-12 and Ser-62. Ser-62 serves as the catalytic Phosphoserine intermediate. Residues His-123, 153 to 154 (RD), Arg-185, Arg-191, 260 to 263 (RPDR), and Lys-333 each bind substrate. Positions 400, 404, 441, 442, and 460 each coordinate Mn(2+).

Belongs to the BPG-independent phosphoglycerate mutase family. As to quaternary structure, monomer. Mn(2+) is required as a cofactor.

It carries out the reaction (2R)-2-phosphoglycerate = (2R)-3-phosphoglycerate. It participates in carbohydrate degradation; glycolysis; pyruvate from D-glyceraldehyde 3-phosphate: step 3/5. Catalyzes the interconversion of 2-phosphoglycerate and 3-phosphoglycerate. This is 2,3-bisphosphoglycerate-independent phosphoglycerate mutase from Clostridium perfringens (strain 13 / Type A).